Consider the following 482-residue polypeptide: Uric acid transporter UacT (482 aa).

Residues 1–29 (MSAIDSQLPSSSGQDRPTDEVDRILSPGK) are Cytoplasmic-facing. A helical membrane pass occupies residues 30–50 (LIILGLQHVLVMYAGAVAVPL). At 51-62 (MIGDRLGLSKEA) the chain is on the periplasmic side. Residues 63–83 (IAMLISSDLFCCGIVTLLQCI) traverse the membrane as a helical segment. Residues 84–92 (GIGRFMGIR) are Cytoplasmic-facing. A helical membrane pass occupies residues 93–113 (LPVIMSVTFAAVTPMIAIGMN). Residues 114 to 115 (PD) lie on the Periplasmic side of the membrane. A helical membrane pass occupies residues 116–136 (IGLLGIFGATIAAGFITTLLA). At 137-142 (PLIGRL) the chain is on the cytoplasmic side. Residues 143 to 163 (MPLFPPLVTGVVITSIGLSII) traverse the membrane as a helical segment. Topologically, residues 164-178 (QVGIDWAAGGKGNPQ) are periplasmic. The chain crosses the membrane as a helical span at residues 179 to 199 (YGNPVYLGISFAVLIFILLIT). Residues 200 to 204 (RYAKG) are Cytoplasmic-facing. A helical transmembrane segment spans residues 205-225 (FMSNVAVLLGIVFGFLLSWMM). At 226–261 (NEVNLSGLHDASWFAIVTPMSFGMPIFDPVSILTMT) the chain is on the periplasmic side. A helical membrane pass occupies residues 262 to 282 (AVLIIVFIESMGMFLALGEIV). Topologically, residues 283 to 337 (GRKLSSHDIIRGLRVDGVGTMIGGTFNSFPHTSFSQNVGLVSVTRVHSRWVCISS) are cytoplasmic. A helical membrane pass occupies residues 338-358 (GIILILFGMVPKMAVLVASIP). Position 359 (glutamine 359) is a topological domain, periplasmic. The helical transmembrane segment at 360 to 380 (FVLGGAGLVMFGMVLATGIRI) threads the bilayer. Topologically, residues 381 to 392 (LSRCNYTTNRYN) are cytoplasmic. The helical transmembrane segment at 393-413 (LYIVAISLGVGMTPTLSHDFF) threads the bilayer. The Periplasmic segment spans residues 414 to 421 (SKLPAVLQ). Residues 422–442 (PLLHSGIMLATLSAVVLNVFF) form a helical membrane-spanning segment. At 443–482 (NGYQHHADLVKESVSDKDLKVRTVRMWLLMRKLKKNEHGE) the chain is on the cytoplasmic side.

The protein belongs to the nucleobase:cation symporter-2 (NCS2) (TC 2.A.40) family.

Its subcellular location is the cell inner membrane. Its activity is regulated as follows. Inhibited in the presence of the protonophore carbonyl cyanide m-chlorophenyl hydrazone. Its function is as follows. Proton-dependent high-capacity transporter for uric acid. Also shows a low capacity for transport of xanthine at 37 degrees Celsius but not at 25 degrees Celsius. This Escherichia coli (strain K12) protein is Uric acid transporter UacT (uacT).